Consider the following 388-residue polypeptide: Succinate--CoA ligase [ADP-forming] subunit beta (388 aa).

Positions 9-244 constitute an ATP-grasp domain; that stretch reads KGVLSSFGVT…PDEYAAEELE (236 aa). ATP-binding positions include lysine 46, 53–55, glutamate 99, valine 102, and glutamate 107; that span reads GRG. Positions 199 and 213 each coordinate Mg(2+). Residues asparagine 264 and 320–322 each bind substrate; that span reads GIM.

The protein belongs to the succinate/malate CoA ligase beta subunit family. In terms of assembly, heterotetramer of two alpha and two beta subunits. Mg(2+) serves as cofactor.

The catalysed reaction is succinate + ATP + CoA = succinyl-CoA + ADP + phosphate. It catalyses the reaction GTP + succinate + CoA = succinyl-CoA + GDP + phosphate. It functions in the pathway carbohydrate metabolism; tricarboxylic acid cycle; succinate from succinyl-CoA (ligase route): step 1/1. Succinyl-CoA synthetase functions in the citric acid cycle (TCA), coupling the hydrolysis of succinyl-CoA to the synthesis of either ATP or GTP and thus represents the only step of substrate-level phosphorylation in the TCA. The beta subunit provides nucleotide specificity of the enzyme and binds the substrate succinate, while the binding sites for coenzyme A and phosphate are found in the alpha subunit. In Anaplasma marginale (strain St. Maries), this protein is Succinate--CoA ligase [ADP-forming] subunit beta.